The primary structure comprises 338 residues: 1-aminocyclopropane-1-carboxylate deaminase (338 aa).

Residue Lys51 is modified to N6-(pyridoxal phosphate)lysine. The Nucleophile role is filled by Ser78.

It belongs to the ACC deaminase/D-cysteine desulfhydrase family. In terms of assembly, homotrimer. Pyridoxal 5'-phosphate serves as cofactor.

The catalysed reaction is 1-aminocyclopropane-1-carboxylate + H2O = 2-oxobutanoate + NH4(+). Catalyzes a cyclopropane ring-opening reaction, the irreversible conversion of 1-aminocyclopropane-1-carboxylate (ACC) to ammonia and alpha-ketobutyrate. Allows growth on ACC as a nitrogen source. The polypeptide is 1-aminocyclopropane-1-carboxylate deaminase (Methylibium petroleiphilum (strain ATCC BAA-1232 / LMG 22953 / PM1)).